The primary structure comprises 91 residues: Signal recognition particle 19 kDa protein (91 aa).

Belongs to the SRP19 family. Part of the signal recognition particle protein translocation system, which is composed of SRP and FtsY. Archaeal SRP consists of a 7S RNA molecule of 300 nucleotides and two protein subunits: SRP54 and SRP19.

It is found in the cytoplasm. In terms of biological role, involved in targeting and insertion of nascent membrane proteins into the cytoplasmic membrane. Binds directly to 7S RNA and mediates binding of the 54 kDa subunit of the SRP. The chain is Signal recognition particle 19 kDa protein from Methanoregula boonei (strain DSM 21154 / JCM 14090 / 6A8).